Consider the following 132-residue polypeptide: Small ribosomal subunit protein uS8 (132 aa).

The protein belongs to the universal ribosomal protein uS8 family. In terms of assembly, part of the 30S ribosomal subunit. Contacts proteins S5 and S12.

One of the primary rRNA binding proteins, it binds directly to 16S rRNA central domain where it helps coordinate assembly of the platform of the 30S subunit. In Listeria innocua serovar 6a (strain ATCC BAA-680 / CLIP 11262), this protein is Small ribosomal subunit protein uS8.